A 402-amino-acid chain; its full sequence is Sulfate adenylyltransferase (402 aa).

The protein belongs to the sulfate adenylyltransferase family.

The catalysed reaction is sulfate + ATP + H(+) = adenosine 5'-phosphosulfate + diphosphate. It participates in sulfur metabolism; hydrogen sulfide biosynthesis; sulfite from sulfate: step 1/3. This Ruthia magnifica subsp. Calyptogena magnifica protein is Sulfate adenylyltransferase.